Consider the following 565-residue polypeptide: Zinc finger protein 143 (565 aa).

7 C2H2-type zinc fingers span residues 230–254 (FRCDYEGCGKLYTTAHHLKVHERSH), 260–284 (YQCDHGSCRKAFATGYGLKSHVRTH), 290–314 (YRCSEENCTKSFKTSGDLQKHVRTH), 320–344 (FKCPFEGCGRSFTTSNIRKVHIRTH), 350–374 (YYCSEPGCGRAFASATNYKNHVRIH), 380–404 (YVCTVPGCDKRFTEYSSLYKHHVVH), and 410–433 (YNCNHCGKTYKQISTLAMHKRTAH).

Belongs to the GLI C2H2-type zinc-finger protein family.

The protein localises to the nucleus. In terms of biological role, transcriptional activator. Activates the gene for selenocysteine tRNA (tRNAsec). Binds to the activator element (AE) motif of the selenocysteine tRNA gene promoter. In Xenopus laevis (African clawed frog), this protein is Zinc finger protein 143 (znf143).